The chain runs to 299 residues: MTREQYILATQQNNLPRTENAQLYPVGIYGWRKRCLYFFVLLLLVTMIVNLAMTIWILKVMNFTVDGMGNLRVTKKGIRLEGISEFLLPLYVKEIHSRKDSPLVLQSDRNVTVNARNHMGQLTGQLTIGADAVEAQCKRFEVRASEDGRVLFSADEDEITIGAEKLKVTGTEGAVFGHSVETPHIRAEPSQDLRLESPTRSLIMEAPRGVQVSAAAGDFKATCRKELHLQSTEGEIFLNAETIKLGNLPTGSFSSSSPSSSSSRQTVYELCVCPNGKLYLSPAGVGSTCQSSSNICLWS.

Residues 1 to 37 (MTREQYILATQQNNLPRTENAQLYPVGIYGWRKRCLY) are Cytoplasmic-facing. The chain crosses the membrane as a helical; Signal-anchor for type II membrane protein span at residues 38–58 (FFVLLLLVTMIVNLAMTIWIL). Over 59 to 299 (KVMNFTVDGM…QSSSNICLWS (241 aa)) the chain is Extracellular. N62 and N110 each carry an N-linked (GlcNAc...) asparagine glycan. An intrachain disulfide couples C273 to C289.

This sequence belongs to the sarcoglycan beta/delta/gamma/zeta family.

The protein resides in the cell membrane. The protein localises to the sarcolemma. It localises to the cytoplasm. It is found in the cytoskeleton. Component of the sarcoglycan complex, a subcomplex of the dystrophin-glycoprotein complex which forms a link between the F-actin cytoskeleton and the extracellular matrix. May play a role in the maintenance of striated muscle membrane stability. This chain is Zeta-sarcoglycan (SGCZ), found in Homo sapiens (Human).